Reading from the N-terminus, the 82-residue chain is Costars family protein v1g158749 (82 aa).

It belongs to the costars family.

The chain is Costars family protein v1g158749 from Nematostella vectensis (Starlet sea anemone).